The primary structure comprises 235 residues: Photosystem I assembly protein Ycf4 (235 aa).

The next 2 membrane-spanning stretches (helical) occupy residues 21–43 and 63–85; these read NLCWACILFLGSLGFLLVGTSSY and GIVMSFYGIAGLFISSYLWCTIL.

Belongs to the Ycf4 family.

The protein resides in the plastid. Its subcellular location is the chloroplast thylakoid membrane. In terms of biological role, seems to be required for the assembly of the photosystem I complex. The polypeptide is Photosystem I assembly protein Ycf4 (Amborella trichopoda).